Reading from the N-terminus, the 380-residue chain is Protein Wnt-5a (380 aa).

The first 40 residues, 1–40, serve as a signal peptide directing secretion; that stretch reads MRKNLWTFQFGGEASGLVGSAMVSQHFVVLLMSLYCLTQS. A disulfide bridge links cysteine 104 with cysteine 115. N-linked (GlcNAc...) asparagine glycans are attached at residues asparagine 114 and asparagine 120. 10 disulfides stabilise this stretch: cysteine 154/cysteine 162, cysteine 164/cysteine 182, cysteine 238/cysteine 252, cysteine 240/cysteine 247, cysteine 309/cysteine 340, cysteine 325/cysteine 335, cysteine 339/cysteine 379, cysteine 355/cysteine 370, cysteine 357/cysteine 367, and cysteine 362/cysteine 363. Serine 244 carries O-palmitoleoyl serine; by PORCN lipidation. Asparagine 312 and asparagine 326 each carry an N-linked (GlcNAc...) asparagine glycan.

Belongs to the Wnt family. Palmitoleoylation is required for efficient binding to frizzled receptors. Depalmitoleoylation leads to Wnt signaling pathway inhibition. As to expression, found primarily in ectoderm with lower levels of expression in mesoderm. Detected in the head and tail with lower expression in the middle of the embryo. No expression was found in the notochord.

The protein localises to the secreted. Its subcellular location is the extracellular space. It is found in the extracellular matrix. Its function is as follows. Ligand for members of the frizzled family of seven transmembrane receptors. Can activate or inhibit canonical Wnt signaling, depending on receptor context. Plays a role in normal embryonic development. In Xenopus laevis (African clawed frog), this protein is Protein Wnt-5a (wnt5a).